The primary structure comprises 236 residues: MTRRYWNINLKEMIEAGVHFGHGIKKWNPKMAPYISAKRKGTHITNLARTTRFLSEACDLVFDAASQGKSFLIVGTKKRAADLVASAAIRARCHYVNKKWFSGMLTNWSITKTRLSQFRDLRAEEKMEKFHHLPKRDVAILKRKLSTLQRYLGGIKYMTRLPDIVIVLDQQKEYIALRECAILGIPTISLADTNCDPDLANISIPANDDTMTSIRLILNKLVFAICEGRSLYIRNH.

Belongs to the universal ribosomal protein uS2 family.

It localises to the plastid. The protein resides in the chloroplast. In Oryza sativa (Rice), this protein is Small ribosomal subunit protein uS2c (rps2).